The sequence spans 154 residues: Large ribosomal subunit protein uL15 (154 aa).

The tract at residues 17 to 44 is disordered; the sequence is KRVGRGIGSGTGKTGGRGVKGQRSRSGV. A compositionally biased stretch (gly residues) spans 21 to 35; it reads RGIGSGTGKTGGRGV.

Belongs to the universal ribosomal protein uL15 family. Part of the 50S ribosomal subunit.

Its function is as follows. Binds to the 23S rRNA. This chain is Large ribosomal subunit protein uL15, found in Bartonella henselae (strain ATCC 49882 / DSM 28221 / CCUG 30454 / Houston 1) (Rochalimaea henselae).